Here is a 521-residue protein sequence, read N- to C-terminus: Type-1 glutamine synthetase 2 (521 aa).

The 101-residue stretch at 76–176 (NQIKISKSPF…FLMDFIGTNG (101 aa)) folds into the GS beta-grasp domain. Residues 183 to 521 (PRSTLKKVIK…WELERYLEII (339 aa)) form the GS catalytic domain.

This sequence belongs to the glutamine synthetase family.

The catalysed reaction is L-glutamate + NH4(+) + ATP = L-glutamine + ADP + phosphate + H(+). The polypeptide is Type-1 glutamine synthetase 2 (glnA2) (Dictyostelium discoideum (Social amoeba)).